A 323-amino-acid chain; its full sequence is AA9 family lytic polysaccharide monooxygenase A (323 aa).

An N-terminal signal peptide occupies residues 1–19 (MKSFISLLGLSFLTCHASA). The Cu(2+) site is built by His20 and His90. A disulfide bridge connects residues Cys59 and Cys175. Residues His161 and Gln170 each coordinate O2. A Cu(2+)-binding site is contributed by Tyr172. Asn215 carries N-linked (GlcNAc...) asparagine glycosylation. One can recognise a CBM1 domain in the interval 287 to 323 (AVVQKFGQCGGQGWTGGTTCVAGSTCTATNAYYSQCL).

The protein belongs to the polysaccharide monooxygenase AA9 family. Cu(2+) serves as cofactor.

The protein localises to the secreted. It carries out the reaction [(1-&gt;4)-beta-D-glucosyl]n+m + reduced acceptor + O2 = 4-dehydro-beta-D-glucosyl-[(1-&gt;4)-beta-D-glucosyl]n-1 + [(1-&gt;4)-beta-D-glucosyl]m + acceptor + H2O.. In terms of biological role, lytic polysaccharide monooxygenase (LPMO) that depolymerizes crystalline and amorphous polysaccharides via the oxidation of scissile alpha- or beta-(1-4)-glycosidic bonds, yielding C1 and C4 oxidation products. Catalysis by LPMOs requires the reduction of the active-site copper from Cu(II) to Cu(I) by a reducing agent and H(2)O(2) or O(2) as a cosubstrate. This chain is AA9 family lytic polysaccharide monooxygenase A, found in Botryotinia fuckeliana (strain B05.10) (Noble rot fungus).